The primary structure comprises 205 residues: Urease accessory protein UreG (205 aa).

A GTP-binding site is contributed by 14–21 (GPVGSGKT).

It belongs to the SIMIBI class G3E GTPase family. UreG subfamily. Homodimer. UreD, UreF and UreG form a complex that acts as a GTP-hydrolysis-dependent molecular chaperone, activating the urease apoprotein by helping to assemble the nickel containing metallocenter of UreC. The UreE protein probably delivers the nickel.

The protein resides in the cytoplasm. Its function is as follows. Facilitates the functional incorporation of the urease nickel metallocenter. This process requires GTP hydrolysis, probably effectuated by UreG. This chain is Urease accessory protein UreG, found in Escherichia coli O157:H7.